We begin with the raw amino-acid sequence, 2184 residues long: Genome polyprotein (2184 aa).

Residue Gly-2 is the site of N-myristoyl glycine; by host attachment. Over Gly-2–Gln-1494 the chain is Cytoplasmic. Residues Phe-567–Val-583 are amphipathic alpha-helix. Active-site for protease 2A activity residues include His-871 and Asp-889. Residues Cys-906 and Cys-908 each contribute to the Zn(2+) site. The active-site For protease 2A activity is Cys-960. 2 residues coordinate Zn(2+): Cys-966 and His-968. The tract at residues Asn-1100–Gln-1172 is membrane-binding. The segment at Asn-1100–Thr-1238 is oligomerization. The tract at residues Ala-1121–Gln-1125 is RNA-binding. The SF3 helicase domain maps to Glu-1204–Asn-1360. Zn(2+) is bound by residues Cys-1368, Cys-1380, and Cys-1385. The C4-type; degenerate zinc finger occupies Cys-1368–Cys-1385. Positions Glu-1412–Val-1419 are RNA-binding. The segment at Leu-1423–Gln-1428 is oligomerization. The stretch at Ala-1495–Tyr-1510 is an intramembrane region. Over Lys-1511–Phe-2184 the chain is Cytoplasmic. The residue at position 1520 (Tyr-1520) is an O-(5'-phospho-RNA)-tyrosine. A Peptidase C3 domain is found at Gly-1540 to Phe-1718. Active-site for protease 3C activity residues include His-1579, Glu-1610, and Cys-1686. The RdRp catalytic domain occupies Gly-1949–Leu-2065. Mg(2+) contacts are provided by Asp-1955 and Asp-2051.

This sequence belongs to the picornaviruses polyprotein family. In terms of assembly, interacts with capsid protein VP1 and capsid protein VP3 to form heterotrimeric protomers. Interacts with capsid protein VP0, and capsid protein VP3 to form heterotrimeric protomers. Five protomers subsequently associate to form pentamers which serve as building blocks for the capsid. Interacts with capsid protein VP2, capsid protein VP3 and capsid protein VP4 following cleavage of capsid protein VP0. As to quaternary structure, interacts with capsid protein VP1 and capsid protein VP3 in the mature capsid. In terms of assembly, interacts with capsid protein VP0 and capsid protein VP1 to form heterotrimeric protomers. Five protomers subsequently associate to form pentamers which serve as building blocks for the capsid. Interacts with capsid protein VP4 in the mature capsid. Interacts with protein 2C; this interaction may be important for virion morphogenesis. Interacts with capsid protein VP1 and capsid protein VP3. As to quaternary structure, homodimer. In terms of assembly, homohexamer; forms a hexameric ring structure with 6-fold symmetry characteristic of AAA+ ATPases. Interacts (via N-terminus) with host RTN3 (via reticulon domain); this interaction is important for viral replication. Interacts with capsid protein VP3; this interaction may be important for virion morphogenesis. Interacts with protein 3CD. As to quaternary structure, homodimer. Interacts with host GBF1. Interacts (via GOLD domain) with host ACBD3 (via GOLD domain); this interaction allows the formation of a viral protein 3A/ACBD3 heterotetramer with a 2:2 stoichiometry, which will stimulate the recruitment of host PI4KB in order to synthesize PI4P at the viral RNA replication sites. In terms of assembly, interacts with RNA-directed RNA polymerase. Interacts with protein 3AB and with RNA-directed RNA polymerase. As to quaternary structure, interacts with Viral protein genome-linked and with protein 3CD. The cofactor is Mg(2+). In terms of processing, specific enzymatic cleavages in vivo by the viral proteases yield processing intermediates and the mature proteins. Post-translationally, myristoylation is required for the formation of pentamers during virus assembly. Further assembly of 12 pentamers and a molecule of genomic RNA generates the provirion. During virion maturation, immature virions are rendered infectious following cleavage of VP0 into VP4 and VP2. This maturation seems to be an autocatalytic event triggered by the presence of RNA in the capsid and it is followed by a conformational change infectious virion. In terms of processing, myristoylation is required during RNA encapsidation and formation of the mature virus particle. Post-translationally, VPg is uridylylated by the polymerase into VPg-pUpU. This acts as a nucleotide-peptide primer for the genomic RNA replication.

It is found in the virion. The protein localises to the host cytoplasm. The protein resides in the host cytoplasmic vesicle membrane. It localises to the host nucleus. The enzyme catalyses a ribonucleoside 5'-triphosphate + H2O = a ribonucleoside 5'-diphosphate + phosphate + H(+). It carries out the reaction Selective cleavage of Tyr-|-Gly bond in the picornavirus polyprotein.. The catalysed reaction is RNA(n) + a ribonucleoside 5'-triphosphate = RNA(n+1) + diphosphate. It catalyses the reaction Selective cleavage of Gln-|-Gly bond in the poliovirus polyprotein. In other picornavirus reactions Glu may be substituted for Gln, and Ser or Thr for Gly.. Its activity is regulated as follows. Replication or transcription is subject to high level of random mutations by the nucleotide analog ribavirin. Functionally, forms an icosahedral capsid of pseudo T=3 symmetry with capsid proteins VP2 and VP3. The capsid is 300 Angstroms in diameter, composed of 60 copies of each capsid protein and enclosing the viral positive strand RNA genome. Capsid protein VP1 mainly forms the vertices of the capsid. Capsid protein VP1 interacts with host ITGA2/ITGB1 to provide virion attachment to target host cells. This attachment induces virion internalization predominantly through caveolin-mediated endocytosis. Tyrosine kinases are probably involved in the entry process. After binding to its receptor, the capsid undergoes conformational changes. Capsid protein VP1 N-terminus (that contains an amphipathic alpha-helix) and capsid protein VP4 are externalized. Together, they shape a pore in the host membrane through which viral genome is translocated to host cell cytoplasm. In terms of biological role, forms an icosahedral capsid of pseudo T=3 symmetry with capsid proteins VP2 and VP3. The capsid is 300 Angstroms in diameter, composed of 60 copies of each capsid protein and enclosing the viral positive strand RNA genome. Its function is as follows. Lies on the inner surface of the capsid shell. After binding to the host receptor, the capsid undergoes conformational changes. Capsid protein VP4 is released, Capsid protein VP1 N-terminus is externalized, and together, they shape a pore in the host membrane through which the viral genome is translocated into the host cell cytoplasm. Component of immature procapsids, which is cleaved into capsid proteins VP4 and VP2 after maturation. Allows the capsid to remain inactive before the maturation step. Functionally, cysteine protease that cleaves viral polyprotein and specific host proteins. It is responsible for the autocatalytic cleavage between the P1 and P2 regions, which is the first cleavage occurring in the polyprotein. Also cleaves the host translation initiation factor EIF4G1, in order to shut down the capped cellular mRNA translation. Inhibits the host nucleus-cytoplasm protein and RNA trafficking by cleaving host members of the nuclear pores. Counteracts stress granule formation probably by antagonizing its assembly or promoting its dissassembly. In terms of biological role, plays an essential role in the virus replication cycle by acting as a viroporin. Creates a pore in the host endoplasmic reticulum and as a consequence releases Ca2+ in the cytoplasm of infected cell. In turn, high levels of cytoplasmic calcium may trigger membrane trafficking and transport of viral ER-associated proteins to viroplasms, sites of viral genome replication. Its function is as follows. Induces and associates with structural rearrangements of intracellular membranes. Displays RNA-binding, nucleotide binding and NTPase activities. May play a role in virion morphogenesis and viral RNA encapsidation by interacting with the capsid protein VP3. Localizes the viral replication complex to the surface of membranous vesicles. Together with protein 3CD binds the Cis-Active RNA Element (CRE) which is involved in RNA synthesis initiation. Acts as a cofactor to stimulate the activity of 3D polymerase, maybe through a nucleid acid chaperone activity. Functionally, localizes the viral replication complex to the surface of membranous vesicles. It inhibits host cell endoplasmic reticulum-to-Golgi apparatus transport and causes the disassembly of the Golgi complex, possibly through GBF1 interaction. This would result in depletion of MHC, trail receptors and IFN receptors at the host cell surface. Plays an essential role in viral RNA replication by recruiting ACBD3 and PI4KB at the viral replication sites, thereby allowing the formation of the rearranged membranous structures where viral replication takes place. In terms of biological role, acts as a primer for viral RNA replication and remains covalently bound to viral genomic RNA. VPg is uridylylated prior to priming replication into VPg-pUpU. The oriI viral genomic sequence may act as a template for this. The VPg-pUpU is then used as primer on the genomic RNA poly(A) by the RNA-dependent RNA polymerase to replicate the viral genome. During genome replication, the VPg-RNA linkage is removed by the host TDP2, thereby accelerating replication. During the late stage of the replication cycle, host TDP2 is excluded from sites of viral RNA synthesis and encapsidation, allowing for the generation of progeny virions. Its function is as follows. Involved in the viral replication complex and viral polypeptide maturation. It exhibits protease activity with a specificity and catalytic efficiency that is different from protease 3C. Protein 3CD lacks polymerase activity. Protein 3CD binds to the 5'UTR of the viral genome. Replicates the viral genomic RNA on the surface of intracellular membranes. May form linear arrays of subunits that propagate along a strong head-to-tail interaction called interface-I. Covalently attaches UMP to a tyrosine of VPg, which is used to prime RNA synthesis. The positive stranded RNA genome is first replicated at virus induced membranous vesicles, creating a dsRNA genomic replication form. This dsRNA is then used as template to synthesize positive stranded RNA genomes. ss(+)RNA genomes are either translated, replicated or encapsidated. Functionally, major viral protease that mediates proteolytic processing of the polyprotein. Cleaves host EIF5B, contributing to host translation shutoff. Also cleaves host PABPC1, contributing to host translation shutoff. Cleaves host NLRP1, triggers host N-glycine-mediated degradation of the autoinhibitory NLRP1 N-terminal fragment. In Homo sapiens (Human), this protein is Genome polyprotein.